Here is a 464-residue protein sequence, read N- to C-terminus: Zinc transporter 6-A (464 aa).

The Cytoplasmic segment spans residues 1–33 (MGTIYLFRKTQRSLLGKLAQEFRLVTADRRSWK). A helical transmembrane segment spans residues 34–54 (ILLFGAINVVCTAFLLTWCSS). At 55 to 64 (TNSMALTAYT) the chain is on the extracellular side. A helical transmembrane segment spans residues 65–85 (YLTIFDLFSLITSLISYWVTM). Residues 86–98 (KKPSPTYSFGFER) are Cytoplasmic-facing. The helical transmembrane segment at 99 to 119 (FEVLAVFASTVLAQLGALFIL) threads the bilayer. Over 120-134 (KESAERFIEQPEIHT) the chain is Extracellular. Residues 135-155 (GRLLVGTFVALFFNLFTMLSI) form a helical membrane-spanning segment. The Cytoplasmic segment spans residues 156 to 200 (RNKPFAYVSDAASTSWLQEHVADLSRSLCGIIPGLSSIFLPRMNP). A helical membrane pass occupies residues 201 to 221 (FVLIDIAGALALCITYMLIEI). Topologically, residues 222–223 (NN) are extracellular. Residues 224–244 (YFAVDTASAVAIAVMTFGTMY) traverse the membrane as a helical segment. Residues 245–464 (PMSVYSGKVL…TPGQFTQFRQ (220 aa)) lie on the Cytoplasmic side of the membrane.

This sequence belongs to the cation diffusion facilitator (CDF) transporter (TC 2.A.4) family. SLC30A subfamily. Heterodimer with SLC30A5; form a functional zinc ion transmembrane transporter.

It localises to the golgi apparatus. Its subcellular location is the trans-Golgi network membrane. Its function is as follows. Has probably no intrinsic transporter activity but together with SLC30A5 forms a functional zinc ion:proton antiporter heterodimer, mediating zinc entry into the lumen of organelles along the secretory pathway. As part of that zinc ion:proton antiporter, contributes to zinc ion homeostasis within the early secretory pathway and regulates the activation and folding of enzymes like alkaline phosphatases and enzymes involved in phosphatidylinositol glycan anchor biosynthesis. This is Zinc transporter 6-A (slc30a6-a) from Xenopus laevis (African clawed frog).